Reading from the N-terminus, the 445-residue chain is MDVREAIQQEAGAETGFASVTFNQDESCFSCANEQGFLVYNTFPLSLKLTKEFKQTPERGAGIGYSQMLYRTNYIALVGGGQRPRYSLNRVVIWDDLQQKESFSLKFMSIVRKVVLSRVHLVVALENELFIYSFHSTPKLLCPPIKTAPFGPFDFKVVTIEGKATDQAKVTSLLAYPSAKLTGQLHVADLSKLRSNQNNNQDMALTSESFLPTTIIKAHKAPIRNVRINNQGTMVATASRKGTLIRIFSTHNGILLKEFRRGLDRAEIYDMCFSPLGTRLAVVSDKQTLHVFQIAPMAEGTLNPANPEDHQSSGSNGHIKANTNQVHSLRNIVPTSWKPKYLDSVWSMCKVHLRNPKLRNNVNDLAFNEDRCTIAWCRQNRSHTFKNGNHFNENEENKLVLVWKNSRIWEKYVILEKEAPNSNDGIKGPSPLTEWELVRESWREL.

2 WD repeats span residues 218–258 (AHKA…LLKE) and 263–302 (LDRA…EGTL). The tract at residues 301–321 (TLNPANPEDHQSSGSNGHIKA) is disordered. Residues 312 to 321 (SSGSNGHIKA) are compositionally biased toward polar residues.

The protein belongs to the WD repeat PROPPIN family.

The protein localises to the vacuole membrane. It is found in the cytoplasmic vesicle membrane. Functionally, involved in mitochondrial or peroxisomal functions and amino acid signaling pathways. The sequence is that of SVP1-like protein 2 (HSV2) from Candida glabrata (strain ATCC 2001 / BCRC 20586 / JCM 3761 / NBRC 0622 / NRRL Y-65 / CBS 138) (Yeast).